Reading from the N-terminus, the 206-residue chain is Tetrathionate response regulatory protein TtrR (206 aa).

Residues Thr-3–Leu-117 enclose the Response regulatory domain. Asp-52 is modified (4-aspartylphosphate). The region spanning Gln-134–Ala-194 is the HTH luxR-type domain. A DNA-binding region (H-T-H motif) is located at residues Asn-153 to Ala-172.

In terms of processing, phosphorylated by TtrS.

The protein localises to the cytoplasm. Member of the two-component regulatory system TtrR/TtrS, which is required for synthesis of tetrathionate reductase. Positively regulates transcription of the ttrBCA operon. During mice infection, the ability to use tetrathionate as an electron acceptor is a growth advantage for S.typhimurium over the competing microbiota in the lumen of the inflamed gut. This is Tetrathionate response regulatory protein TtrR (ttrR) from Salmonella typhimurium (strain LT2 / SGSC1412 / ATCC 700720).